The chain runs to 556 residues: Sphingomyelinase C (556 aa).

The first 27 residues, 1 to 27 (MRIKKYTKVRLLVNCCLLLFFLIDCGA), serve as a signal peptide directing secretion.

Its subcellular location is the secreted. The enzyme catalyses a sphingomyelin + H2O = phosphocholine + an N-acylsphing-4-enine + H(+). The chain is Sphingomyelinase C (sph) from Leptospira interrogans.